Reading from the N-terminus, the 130-residue chain is General stress protein 13 (130 aa).

The region spanning 8–77 (GSVYTGKVTG…EKGKISLSIR (70 aa)) is the S1 motif domain. The segment at 76–109 (IRATQAAPEKKESKPRKPKAAQVSEEASTPQGFN) is disordered. Positions 100–109 (EEASTPQGFN) are enriched in polar residues.

In terms of assembly, found in association with the 30S subunit of the ribosome.

Its subcellular location is the cytoplasm. This chain is General stress protein 13 (yugI), found in Bacillus subtilis (strain 168).